A 908-amino-acid chain; its full sequence is NADH-quinone oxidoreductase subunit G (908 aa).

Residues 2–83 form the 2Fe-2S ferredoxin-type domain; it reads ATIHVDGKEY…GTFISIDDEE (82 aa). [2Fe-2S] cluster-binding residues include cysteine 34, cysteine 45, cysteine 48, and cysteine 67. A 4Fe-4S His(Cys)3-ligated-type domain is found at 83–122; it reads EAKQFRESVVEWLMTNHPHDCPVCEEGGNCHLQDMTVMTG. Residues histidine 99, cysteine 103, cysteine 106, cysteine 112, cysteine 151, cysteine 154, cysteine 157, cysteine 201, cysteine 228, cysteine 231, cysteine 235, and cysteine 263 each coordinate [4Fe-4S] cluster. The 4Fe-4S Mo/W bis-MGD-type domain occupies 221–277; the sequence is MQFAPSICQQCSIGCNISPGERYGELRRIENRYNGTVNHYFLCDRGRFGYGYVNLKD.

This sequence belongs to the complex I 75 kDa subunit family. As to quaternary structure, composed of 13 different subunits. Subunits NuoCD, E, F, and G constitute the peripheral sector of the complex. Requires [2Fe-2S] cluster as cofactor. The cofactor is [4Fe-4S] cluster.

The protein resides in the cytoplasm. It localises to the cell inner membrane. It catalyses the reaction a quinone + NADH + 5 H(+)(in) = a quinol + NAD(+) + 4 H(+)(out). In terms of biological role, NDH-1 shuttles electrons from NADH, via FMN and iron-sulfur (Fe-S) centers, to quinones in the respiratory chain. The immediate electron acceptor for the enzyme in this species is believed to be ubiquinone. Couples the redox reaction to proton translocation (for every two electrons transferred, four hydrogen ions are translocated across the cytoplasmic membrane), and thus conserves the redox energy in a proton gradient. This chain is NADH-quinone oxidoreductase subunit G (nuoG), found in Escherichia coli (strain K12).